A 455-amino-acid polypeptide reads, in one-letter code: Folate transporter 2 (455 aa).

A run of 8 helical transmembrane segments spans residues 42–64, 84–103, 110–131, 137–157, 177–195, 201–221, 242–261, and 281–301; these read IVVYLVGLSDGLTHLASLAIYYL, YIPFILKPVIALITDSFSIF, YLFLFSLFQSLNFLALAFLNLS, LILFFISLCASFCTTVAEALV, IASKAIGSLSVAYFSGYFL, EYIFIATSIFPLIISLSCLFL, FINTPIFLGPFLYIFVYMSG, and SFMGTLRLTYGIASLIGIIIY. Asn-307 is a glycosylation site (N-linked (GlcNAc...) asparagine). The next 2 helical transmembrane spans lie at 313 to 331 and 347 to 367; these read TLIITTLVSFPIYISPIIL and VLSGGFLIEAITEIQLLPLFI. N-linked (GlcNAc...) asparagine glycosylation is present at Asn-416. Residues 417 to 438 traverse the membrane as a helical segment; sequence LSLYILTCGFFLLFSLTLVPLL.

It belongs to the major facilitator superfamily. Folate-biopterin transporter (TC 2.A.71) family.

The protein localises to the cell membrane. The enzyme catalyses folate(in) + H(+)(in) = folate(out) + H(+)(out). It catalyses the reaction (6S)-5-methyl-5,6,7,8-tetrahydrofolate(in) + H(+)(in) = (6S)-5-methyl-5,6,7,8-tetrahydrofolate(out) + H(+)(out). Transport of folates is inhibited by probenecid and methotrexate. Folate transporter with broad substrate specificity. Transports folic acid, folinic acid, pteroic acid, dihydropteroic acid, the folate precursor p-amino benzoic acid (pABA) and the human folate catabolite pABA monoglutamate. Can transport 5-methyltetrahydrofolate with low efficiency. The sequence is that of Folate transporter 2 from Plasmodium falciparum (isolate 3D7).